A 530-amino-acid chain; its full sequence is Tegument protein UL21 homolog (530 aa).

This sequence belongs to the alphaherpesvirinae UL21 protein family. As to quaternary structure, interacts (via C-terminus) with UL16.

It is found in the virion tegument. It localises to the host cytoplasm. Its subcellular location is the host nucleus. May participate in DNA packaging/capsid maturation events. Promotes efficient incorporation of tegument proteins UL46, UL49, and US3 homologs into virions. May also play a role in capsid transport to the trans-Golgi network (TGN). This is Tegument protein UL21 homolog from Equus caballus (Horse).